The chain runs to 205 residues: MSVNASTLVADNLADAASLEGLPENVSAGHAAAGTEEHHVDPTALGMTATAWVSLAMVIVILLLLWKKVPSVIGASLDKKIASIRANLDEAAALRADAEKLKAEYEAKAKAAAKEAEEMLAHARSEAEAIVSQARVDATALIERRGKMAEDKIAAAERGAVAEVRAKAASAAAAAAGALIAERNNAKADKALIDGAIDALGNARF.

A helical membrane pass occupies residues 45 to 65 (LGMTATAWVSLAMVIVILLLL).

It belongs to the ATPase B chain family. As to quaternary structure, F-type ATPases have 2 components, F(1) - the catalytic core - and F(0) - the membrane proton channel. F(1) has five subunits: alpha(3), beta(3), gamma(1), delta(1), epsilon(1). F(0) has three main subunits: a(1), b(2) and c(10-14). The alpha and beta chains form an alternating ring which encloses part of the gamma chain. F(1) is attached to F(0) by a central stalk formed by the gamma and epsilon chains, while a peripheral stalk is formed by the delta and b chains.

The protein localises to the cell inner membrane. In terms of biological role, f(1)F(0) ATP synthase produces ATP from ADP in the presence of a proton or sodium gradient. F-type ATPases consist of two structural domains, F(1) containing the extramembraneous catalytic core and F(0) containing the membrane proton channel, linked together by a central stalk and a peripheral stalk. During catalysis, ATP synthesis in the catalytic domain of F(1) is coupled via a rotary mechanism of the central stalk subunits to proton translocation. Component of the F(0) channel, it forms part of the peripheral stalk, linking F(1) to F(0). The polypeptide is ATP synthase subunit b (Rhizorhabdus wittichii (strain DSM 6014 / CCUG 31198 / JCM 15750 / NBRC 105917 / EY 4224 / RW1) (Sphingomonas wittichii)).